The primary structure comprises 549 residues: FERM domain-containing protein 1 (549 aa).

Residues 1 to 40 (MAVPPRGRGIDPARTNPDTFPPSGARCMEPSPERPACSQQ) form a disordered region. The 316-residue stretch at 54 to 369 (RDVLVLLPSR…DELELDLASR (316 aa)) folds into the FERM domain. Disordered stretches follow at residues 377–400 (SSQH…YTSG) and 422–464 (HGLH…GQSA). A compositionally biased stretch (low complexity) spans 430–443 (SSSPRTSRSHPSTR). Polar residues predominate over residues 444-462 (GDSQATRQEPCTQVRTRGQ).

The polypeptide is FERM domain-containing protein 1 (FRMD1) (Homo sapiens (Human)).